The following is a 434-amino-acid chain: CinA-like protein (434 aa).

It belongs to the CinA family.

The chain is CinA-like protein from Mycolicibacterium paratuberculosis (strain ATCC BAA-968 / K-10) (Mycobacterium paratuberculosis).